The following is a 604-amino-acid chain: MMADSKLVSLNNNLSGKIKDQGKVIKNYYGTMDIKKINDGLLDSKILGAFNTVIALLGSIIIIVMNIMIIQNYTRTTDNQALIKESLQSVQQQIKALTDKIGTEIGPKVSLIDTSSTITIPANIGLLGSKISQSTSSINENVNDKCKFTLPPLKIHECNISCPNPLPFREYRPISQGVSDLVGLPNQICLQKTTSTILKPRLISYTLPINTREGVCITDPLLAVDNGFFAYSHLEKIGSCTRGIAKQRIIGVGEVLDRGDKVPSMFMTNVWTPPNPSTIHHCSSTYHEDFYYTLCAVSHVGDPILNSTSWTESLSLIRLAVRPKSDSGDYNQKYIAITKVERGKYDKVMPYGPSGIKQGDTLYFPAVGFLPRTEFQYNDSNCPIIHCKYSKAENCRLSMGVNSKSHYILRSGLLKYNLSLGGDIILQFIEIADNRLTIGSPSKIYNSLGQPVFYQASYSWDTMIKLGDVDTVDPLRVQWRNNSVISRPGQSQCPRFNVCPEVCWEGTYNDAFLIDRLNWVSAGVYLNSNQTAENPVFAVFKDNEILYQVPLAEDDTNAQKTITDCFLLENVIWCISLVEIYDTGDSVIRPKLFAVKIPAQCSES.

At 1 to 49 (MMADSKLVSLNNNLSGKIKDQGKVIKNYYGTMDIKKINDGLLDSKILGA) the chain is on the intravirion side. A helical membrane pass occupies residues 50 to 70 (FNTVIALLGSIIIIVMNIMII). Residues 71-604 (QNYTRTTDNQ…VKIPAQCSES (534 aa)) are Virion surface-facing. 7 N-linked (GlcNAc...) asparagine; by host glycosylation sites follow: Asn72, Asn159, Asn306, Asn378, Asn417, Asn481, and Asn529.

Belongs to the paramyxoviruses hemagglutinin-neuraminidase family.

The protein localises to the virion membrane. Its subcellular location is the host cell membrane. Functionally, attaches the virus to sialic acid-containing cell receptors and thereby initiating infection. Binding of glycoprotein G to the receptor induces a conformational change that allows the F protein to trigger virion/cell membranes fusion. The polypeptide is Glycoprotein G (G) (Equus caballus (Horse)).